We begin with the raw amino-acid sequence, 67 residues long: DNA-directed RNA polymerase subunit omega (67 aa).

It belongs to the RNA polymerase subunit omega family. The RNAP catalytic core consists of 2 alpha, 1 beta, 1 beta' and 1 omega subunit. When a sigma factor is associated with the core the holoenzyme is formed, which can initiate transcription.

It carries out the reaction RNA(n) + a ribonucleoside 5'-triphosphate = RNA(n+1) + diphosphate. Its function is as follows. Promotes RNA polymerase assembly. Latches the N- and C-terminal regions of the beta' subunit thereby facilitating its interaction with the beta and alpha subunits. The polypeptide is DNA-directed RNA polymerase subunit omega (Leptothrix cholodnii (strain ATCC 51168 / LMG 8142 / SP-6) (Leptothrix discophora (strain SP-6))).